The sequence spans 156 residues: Protein CURVATURE THYLAKOID 1C, chloroplastic (156 aa).

The transit peptide at M1–K55 directs the protein to the chloroplast. The Stromal segment spans residues A56–R83. Residues L84–I104 traverse the membrane as a helical segment. The Lumenal segment spans residues T105–K109. Residues L110 to Y130 traverse the membrane as a helical segment. The Stromal portion of the chain corresponds to R131 to Q156.

This sequence belongs to the CURT family. In terms of assembly, homo- and heterodimers and trimers. Interacts with PSAD2.

The protein resides in the plastid. It localises to the chloroplast thylakoid membrane. Determines thylakoid architecture by inducing membrane curvature. This Arabidopsis thaliana (Mouse-ear cress) protein is Protein CURVATURE THYLAKOID 1C, chloroplastic (CURT1C).